The sequence spans 642 residues: 1,4-alpha-glucan branching enzyme GlgB (642 aa).

D304 functions as the Nucleophile in the catalytic mechanism. E355 serves as the catalytic Proton donor.

The protein belongs to the glycosyl hydrolase 13 family. GlgB subfamily. In terms of assembly, monomer.

It catalyses the reaction Transfers a segment of a (1-&gt;4)-alpha-D-glucan chain to a primary hydroxy group in a similar glucan chain.. Its pathway is glycan biosynthesis; glycogen biosynthesis. Catalyzes the formation of the alpha-1,6-glucosidic linkages in glycogen by scission of a 1,4-alpha-linked oligosaccharide from growing alpha-1,4-glucan chains and the subsequent attachment of the oligosaccharide to the alpha-1,6 position. This Streptococcus pneumoniae serotype 2 (strain D39 / NCTC 7466) protein is 1,4-alpha-glucan branching enzyme GlgB.